The primary structure comprises 134 residues: Retinol-binding protein 2 (134 aa).

Lysine 41 and glutamine 109 together coordinate all-trans-retinol.

The protein belongs to the calycin superfamily. Fatty-acid binding protein (FABP) family.

The protein localises to the cytoplasm. Its function is as follows. Intracellular transport of retinol. The sequence is that of Retinol-binding protein 2 (RBP2) from Sus scrofa (Pig).